A 386-amino-acid chain; its full sequence is Acyl-[acyl-carrier-protein] dehydrogenase MbtN (386 aa).

The protein belongs to the acyl-CoA dehydrogenase family. FAD serves as cofactor.

It participates in siderophore biosynthesis; mycobactin biosynthesis. Its function is as follows. Catalyzes the dehydrogenation at the alpha-beta position of ACP-bound acyl chains. This results in the introduction of a double bond in the lipidic chain, which is further transferred to the epsilon-amino group of lysine residue in the mycobactin core by MbtK. This is Acyl-[acyl-carrier-protein] dehydrogenase MbtN (mbtN) from Mycobacterium bovis (strain ATCC BAA-935 / AF2122/97).